A 518-amino-acid chain; its full sequence is Chromosomal replication initiator protein DnaA (518 aa).

Residues 1–73 (MTLAEFWPLC…REELAAGRPA (73 aa)) form a domain I, interacts with DnaA modulators region. The interval 73–180 (AFVFKPGEGV…DAEEARYEQT (108 aa)) is domain II. The tract at residues 144–180 (HEPRQAAGPASRPESAAVAKARTDAQRDAEEARYEQT) is disordered. The span at 164 to 177 (ARTDAQRDAEEARY) shows a compositional bias: basic and acidic residues. The domain III, AAA+ region stretch occupies residues 181-397 (NLSPDYTFDT…GAFNRVGASS (217 aa)). ATP is bound by residues G225, G227, K228, and T229. Positions 398-518 (RFMNRPVIDI…YEKLLILIQN (121 aa)) are domain IV, binds dsDNA.

It belongs to the DnaA family. As to quaternary structure, oligomerizes as a right-handed, spiral filament on DNA at oriC.

It is found in the cytoplasm. Its function is as follows. Plays an essential role in the initiation and regulation of chromosomal replication. ATP-DnaA binds to the origin of replication (oriC) to initiate formation of the DNA replication initiation complex once per cell cycle. Binds the DnaA box (a 9 base pair repeat at the origin) and separates the double-stranded (ds)DNA. Forms a right-handed helical filament on oriC DNA; dsDNA binds to the exterior of the filament while single-stranded (ss)DNA is stabiized in the filament's interior. The ATP-DnaA-oriC complex binds and stabilizes one strand of the AT-rich DNA unwinding element (DUE), permitting loading of DNA polymerase. After initiation quickly degrades to an ADP-DnaA complex that is not apt for DNA replication. Binds acidic phospholipids. In Neisseria gonorrhoeae (strain ATCC 700825 / FA 1090), this protein is Chromosomal replication initiator protein DnaA.